A 185-amino-acid chain; its full sequence is Large ribosomal subunit protein uL5 (185 aa).

It belongs to the universal ribosomal protein uL5 family. In terms of assembly, part of the 50S ribosomal subunit; contacts the 5S rRNA and probably tRNA. Forms a bridge to the 30S subunit in the 70S ribosome.

In terms of biological role, this is one of the proteins that bind and probably mediate the attachment of the 5S RNA into the large ribosomal subunit, where it forms part of the central protuberance. In the 70S ribosome it contacts protein S13 of the 30S subunit (bridge B1b), connecting the 2 subunits; this bridge is implicated in subunit movement. May contact the P site tRNA; the 5S rRNA and some of its associated proteins might help stabilize positioning of ribosome-bound tRNAs. The sequence is that of Large ribosomal subunit protein uL5 from Haloquadratum walsbyi (strain DSM 16790 / HBSQ001).